A 294-amino-acid polypeptide reads, in one-letter code: Cytidine deaminase (294 aa).

2 CMP/dCMP-type deaminase domains span residues 48 to 168 and 187 to 294; these read DDNT…FGPN and ETTD…YYTF. Residue 89–91 coordinates substrate; sequence NME. Histidine 102 lines the Zn(2+) pocket. Glutamate 104 (proton donor) is an active-site residue. Residues cysteine 129 and cysteine 132 each coordinate Zn(2+).

This sequence belongs to the cytidine and deoxycytidylate deaminase family. Homodimer. Requires Zn(2+) as cofactor.

The enzyme catalyses cytidine + H2O + H(+) = uridine + NH4(+). It carries out the reaction 2'-deoxycytidine + H2O + H(+) = 2'-deoxyuridine + NH4(+). Its function is as follows. This enzyme scavenges exogenous and endogenous cytidine and 2'-deoxycytidine for UMP synthesis. This Photorhabdus laumondii subsp. laumondii (strain DSM 15139 / CIP 105565 / TT01) (Photorhabdus luminescens subsp. laumondii) protein is Cytidine deaminase.